A 781-amino-acid chain; its full sequence is Beta-mannosyltransferase 4 (781 aa).

Residues 1–17 (MTKSYMPLFRSPRQFKK) are Cytoplasmic-facing. A helical membrane pass occupies residues 18-38 (IYFILIPLILAVIILHVFFDG). Topologically, residues 39-781 (FNKISEYSPT…EKEDDDDIEV (743 aa)) are extracellular. Residues 640-733 (KLGDSEAAIK…AKDEDKNEDE (94 aa)) are a coiled coil. Composition is skewed to basic and acidic residues over residues 663 to 728 (KAEK…KDED) and 736 to 750 (KEKN…KSEV). The interval 663–781 (KAEKEKAEKE…EKEDDDDIEV (119 aa)) is disordered. Acidic residues predominate over residues 751–781 (EENGENTNEGGEDDGDGDGEEEKEDDDDIEV).

It belongs to the BMT family.

It localises to the membrane. Functionally, beta-mannosyltransferase involved in cell wall biosynthesis. Required for the elongation of beta-mannose chains on the acid-labile fraction of cell wall phosphopeptidomannan. In Candida albicans (strain SC5314 / ATCC MYA-2876) (Yeast), this protein is Beta-mannosyltransferase 4 (BMT4).